The primary structure comprises 472 residues: Sarcalumenin (472 aa).

The signal sequence occupies residues 1–19 (MRALLLFCFVASLLLSGQA). The Dynamin-type G domain maps to 89–330 (ITSKPMVLFL…IENRLENKIA (242 aa)). Positions 99–106 (GPWSVGKS) are G1 motif. An N-linked (GlcNAc...) asparagine glycan is attached at serine 102. The tract at residues 127 to 128 (EP) is G2 motif. Residues 189 to 192 (DTPG) are G3 motif. Residues 254 to 257 (NKAD) form a G4 motif region. Proline 277 is a region of interest (G5 motif). N-linked (GlcNAc...) asparagine glycosylation is found at asparagine 280 and asparagine 388.

The protein belongs to the TRAFAC class dynamin-like GTPase superfamily. Dynamin/Fzo/YdjA family. N-glycosylated. As to expression, detected in skeletal muscle.

Its subcellular location is the sarcoplasmic reticulum lumen. It is found in the sarcoplasmic reticulum membrane. This is Sarcalumenin (SRL) from Oryctolagus cuniculus (Rabbit).